We begin with the raw amino-acid sequence, 139 residues long: Small ribosomal subunit protein uS11 (139 aa).

The disordered stretch occupies residues 1–33; it reads MPPAKKGPATSARKGQKTRRREKKNVPHGAAHI. Residues 14 to 23 are compositionally biased toward basic residues; sequence KGQKTRRREK.

This sequence belongs to the universal ribosomal protein uS11 family. Part of the 30S ribosomal subunit. Interacts with proteins S7 and S18. Binds to IF-3.

Functionally, located on the platform of the 30S subunit, it bridges several disparate RNA helices of the 16S rRNA. Forms part of the Shine-Dalgarno cleft in the 70S ribosome. This Mycobacterium bovis (strain ATCC BAA-935 / AF2122/97) protein is Small ribosomal subunit protein uS11.